The sequence spans 208 residues: N-hydroxyputrescine acetyltransferase (208 aa).

Belongs to the IucB family.

It catalyses the reaction N-hydroxyputrescine + acetyl-CoA = N(1)-acetyl-N(1)-hydroxyputrescine + CoA. It participates in siderophore biosynthesis. Functionally, N-acetyltransferase involved in the biosynthesis of fimsbactin A, the major siderophore produced by A.baumannii. Catalyzes the acetylation of N-hydroxyputrescine to form N(1)-acetyl-N(1)-hydroxyputrescine (ahPutr). In Acinetobacter baumannii (strain ATCC 17978 / DSM 105126 / CIP 53.77 / LMG 1025 / NCDC KC755 / 5377), this protein is N-hydroxyputrescine acetyltransferase.